A 143-amino-acid polypeptide reads, in one-letter code: Putative pre-16S rRNA nuclease (143 aa).

The protein belongs to the YqgF nuclease family.

It localises to the cytoplasm. Functionally, could be a nuclease involved in processing of the 5'-end of pre-16S rRNA. This Leuconostoc citreum (strain KM20) protein is Putative pre-16S rRNA nuclease.